Consider the following 161-residue polypeptide: E3 ubiquitin ligase complex SCF subunit sconC (161 aa).

The interval I102 to R161 is interaction with the F-box domain of F-box proteins.

This sequence belongs to the SKP1 family. As to quaternary structure, component of the SCF (SKP1-CUL1-F-box protein) E3 ubiquitin ligase complexes.

The protein operates within protein modification; protein ubiquitination. In terms of biological role, essential component of the SCF (SKP1-CUL1-F-box protein) E3 ubiquitin ligase complexes, which mediate the ubiquitination and subsequent proteasomal degradation of target proteins. Controls sulfur metabolite repression, probably by mediating the inactivation or degradation of the metR transcription factor. The polypeptide is E3 ubiquitin ligase complex SCF subunit sconC (sconC) (Emericella nidulans (strain FGSC A4 / ATCC 38163 / CBS 112.46 / NRRL 194 / M139) (Aspergillus nidulans)).